The sequence spans 1172 residues: Lysylphosphatidylglycerol biosynthesis bifunctional protein LysX (1172 aa).

A disordered region spans residues Met-1 to Arg-34. Residues Met-1–Asp-663 are phosphatidylglycerol lysyltransferase. A compositionally biased stretch (polar residues) spans Val-17–Asp-31. The next 7 helical transmembrane spans lie at Val-80–Val-100, Phe-122–Ala-142, Ile-146–Ile-166, Phe-177–Tyr-197, Ala-214–Phe-234, Ala-272–Ser-292, and Val-612–Ser-632. The segment at Val-664 to His-1172 is lysine--tRNA ligase. Positions Val-726 to Ile-804 form a DNA-binding region, OB. Positions 1084 and 1091 each coordinate Mg(2+).

The protein in the N-terminal section; belongs to the LPG synthetase family. This sequence in the C-terminal section; belongs to the class-II aminoacyl-tRNA synthetase family. Mg(2+) serves as cofactor.

The protein resides in the cell membrane. The enzyme catalyses tRNA(Lys) + L-lysine + ATP = L-lysyl-tRNA(Lys) + AMP + diphosphate. It catalyses the reaction L-lysyl-tRNA(Lys) + a 1,2-diacyl-sn-glycero-3-phospho-(1'-sn-glycerol) = a 1,2-diacyl-sn-glycero-3-phospho-1'-(3'-O-L-lysyl)-sn-glycerol + tRNA(Lys). Catalyzes the production of L-lysyl-tRNA(Lys)transfer and the transfer of a lysyl group from L-lysyl-tRNA(Lys) to membrane-bound phosphatidylglycerol (PG), which produces lysylphosphatidylglycerol (LPG), one of the components of the bacterial membrane with a positive net charge. LPG synthesis contributes to the resistance to cationic antimicrobial peptides (CAMPs) and likely protects M.tuberculosis against the CAMPs produced by competiting microorganisms (bacteriocins). In fact, the modification of anionic phosphatidylglycerol with positively charged L-lysine results in repulsion of the peptides. The protein is Lysylphosphatidylglycerol biosynthesis bifunctional protein LysX (lysX) of Mycobacterium bovis (strain ATCC BAA-935 / AF2122/97).